Here is a 296-residue protein sequence, read N- to C-terminus: 5,10-methylenetetrahydrofolate reductase (296 aa).

Glu-28 (proton donor/acceptor) is an active-site residue. NADH is bound at residue Thr-59. The FAD site is built by Tyr-60, Ala-62, His-88, Arg-118, Gly-119, Asp-120, Ala-132, Tyr-152, His-156, Ala-159, Asp-165, Asn-168, Arg-171, and Lys-172. A (6S)-5-methyl-5,6,7,8-tetrahydrofolate-binding site is contributed by Asp-120. Gln-183 is an NADH binding site. Residues Gln-183, Gln-219, and Arg-279 each contribute to the (6S)-5-methyl-5,6,7,8-tetrahydrofolate site.

It belongs to the methylenetetrahydrofolate reductase family. Requires FAD as cofactor.

The enzyme catalyses (6S)-5-methyl-5,6,7,8-tetrahydrofolate + NAD(+) = (6R)-5,10-methylene-5,6,7,8-tetrahydrofolate + NADH + H(+). The protein operates within one-carbon metabolism; tetrahydrofolate interconversion. It functions in the pathway amino-acid biosynthesis; L-methionine biosynthesis via de novo pathway. Its function is as follows. Catalyzes the NADH-dependent reduction of 5,10-methylenetetrahydrofolate to 5-methyltetrahydrofolate. Is required to provide the methyl group necessary for methionine synthetase to convert homocysteine to methionine; the methyl group is given by 5-methyltetrahydrofolate. This Salmonella typhimurium (strain LT2 / SGSC1412 / ATCC 700720) protein is 5,10-methylenetetrahydrofolate reductase (metF).